Here is a 502-residue protein sequence, read N- to C-terminus: Glutamate--tRNA ligase (502 aa).

A 'HIGH' region motif is present at residues 9-19; sequence PSPTGFPHVGT. Positions 250-254 match the 'KMSKS' region motif; the sequence is KLSKR. K253 contacts ATP.

It belongs to the class-I aminoacyl-tRNA synthetase family. Glutamate--tRNA ligase type 1 subfamily. In terms of assembly, monomer.

Its subcellular location is the cytoplasm. The enzyme catalyses tRNA(Glu) + L-glutamate + ATP = L-glutamyl-tRNA(Glu) + AMP + diphosphate. Functionally, catalyzes the attachment of glutamate to tRNA(Glu) in a two-step reaction: glutamate is first activated by ATP to form Glu-AMP and then transferred to the acceptor end of tRNA(Glu). The polypeptide is Glutamate--tRNA ligase (Acinetobacter baylyi (strain ATCC 33305 / BD413 / ADP1)).